Consider the following 222-residue polypeptide: Pro-opiomelanocortin (222 aa).

A signal peptide spans 1–18 (MCPVWLLVAVVVVGGSRG). Residues 19 to 90 (AVSQCWEHPS…SSSSSSSPQS (72 aa)) constitute a propeptide that is removed on maturation. 2 disordered regions span residues 56 to 98 (IPGN…SMEH) and 148 to 170 (EEEK…LQEK). The span at 70–93 (PSSSSSFILPSSSSSSSSPQSKRS) shows a compositional bias: low complexity. A compositionally biased stretch (acidic residues) spans 148 to 162 (EEEKAQEVMAEEEEE).

The protein belongs to the POMC family. Post-translationally, specific enzymatic cleavages at paired basic residues yield the different active peptides.

It is found in the secreted. Stimulates the adrenal glands to release cortisol. In terms of biological role, anorexigenic peptide. Increases the pigmentation of skin by increasing melanin production in melanocytes. Its function is as follows. Increases the pigmentation of skin by increasing melanin production in melanocytes. Functionally, endogenous orexigenic opiate. Endogenous opiate. This is Pro-opiomelanocortin (pomc) from Thunnus obesus (Bigeye tuna).